The sequence spans 382 residues: uncharacterized protein (382 aa).

12 consecutive transmembrane segments (helical) span residues 8–28, 45–65, 75–95, 102–122, 131–151, 157–177, 204–224, 231–251, 270–290, 291–311, 325–345, and 349–369; these read VMLL…LNTL, MVSS…GYLI, YLAS…VGFW, FIAG…LMCS, LLAA…LLVS, LLHV…PLLF, LGVN…GLMP, GMAN…GILG, VQVF…AMAP, ALFI…AWAC, ALLL…AMLM, and SDNL…LMLL.

It belongs to the major facilitator superfamily. YcaD (TC 2.A.1.26) family.

It is found in the cell inner membrane. This is an uncharacterized protein from Salmonella agona (strain SL483).